We begin with the raw amino-acid sequence, 363 residues long: Mitochondrial phosphate carrier protein 2, mitochondrial (363 aa).

The chain crosses the membrane as a helical span at residues 65-85; that stretch reads AYFAACTVAGMLSCGITHTAI. Solcar repeat units follow at residues 65–149, 162–246, and 263–342; these read AYFA…AKKY, YKTL…TVEL, and VQLG…VKVL. Over 86–123 the chain is Mitochondrial matrix; it reads TPLDVIKCNMQIDPLKYKNITSAFKTTIKEQGLKGFTR. The chain crosses the membrane as a helical span at residues 124–143; sequence GWSPTLLGYSAQGAFKYGLY. The Mitochondrial intermembrane segment spans residues 144 to 164; that stretch reads EYAKKYYSDIVGPEYAAKYKT. The helical transmembrane segment at 165–185 threads the bilayer; sequence LIYLAGSASAEIVADVALCPM. Residues 186-220 lie on the Mitochondrial matrix side of the membrane; it reads EAVKVRVQTQPGFARGLSDGLPKIIKSEGFRGLHK. The helical transmembrane segment at 221–240 threads the bilayer; the sequence is GLVPLWGRQIPYTMMKFATF. Over 241 to 261 the chain is Mitochondrial intermembrane; it reads ENTVELIYKKVMPTPKEECSK. Residues 262-282 form a helical membrane-spanning segment; sequence PVQLGVSFAGGYIAGIFCAII. The Mitochondrial matrix portion of the chain corresponds to 283–321; that stretch reads SHPADNLVSFLNNSKGATVADAVKRLGLWGMLTRGLPLR. The chain crosses the membrane as a helical span at residues 322–342; that stretch reads IFMIGTLTGAQWVIYDAVKVL. Topologically, residues 343 to 363 are mitochondrial intermembrane; sequence AGLPTTGGASPATALAPSVSA.

The protein belongs to the mitochondrial carrier (TC 2.A.29) family. In terms of tissue distribution, expressed in leaves. Strong expression in senescent leaves.

The protein resides in the mitochondrion inner membrane. Transport of phosphate groups from the cytosol to the mitochondrial matrix. Mediates salt stress tolerance through an ATP-dependent pathway and via modulation of the gibberellin metabolism. This Arabidopsis thaliana (Mouse-ear cress) protein is Mitochondrial phosphate carrier protein 2, mitochondrial (MPT2).